The primary structure comprises 154 residues: Probable transport accessory protein MmpS4 (154 aa).

2 helical membrane passes run 19–39 and 97–117; these read IWIPLVILVVLVVGGFVVYRV and QLPWSLLMTTTLAAVMGNLVA.

It belongs to the MmpS family.

It localises to the cell membrane. This is Probable transport accessory protein MmpS4 from Mycobacterium leprae (strain TN).